Reading from the N-terminus, the 439-residue chain is Methionine aminopeptidase 2-2 (439 aa).

The segment at 1–90 (MAAQAPPTDE…SQLFPDKQYP (90 aa)) is disordered. Over residues 10–23 (ELSKLSVEDADNKP) the composition is skewed to basic and acidic residues. A compositionally biased stretch (acidic residues) spans 35-45 (DEDDSEDDAED). The segment covering 54-68 (AKKKKKRKPRKKKKN) has biased composition (basic residues). Substrate is bound at residue histidine 192. A divalent metal cation-binding residues include aspartate 212, aspartate 223, and histidine 292. Residue histidine 300 coordinates substrate. A divalent metal cation contacts are provided by glutamate 325 and glutamate 420.

The protein belongs to the peptidase M24A family. Methionine aminopeptidase eukaryotic type 2 subfamily. Co(2+) serves as cofactor. It depends on Zn(2+) as a cofactor. Mn(2+) is required as a cofactor. The cofactor is Fe(2+).

It is found in the cytoplasm. The enzyme catalyses Release of N-terminal amino acids, preferentially methionine, from peptides and arylamides.. Functionally, cotranslationally removes the N-terminal methionine from nascent proteins. The N-terminal methionine is often cleaved when the second residue in the primary sequence is small and uncharged (Met-Ala-, Cys, Gly, Pro, Ser, Thr, or Val). This chain is Methionine aminopeptidase 2-2, found in Chaetomium globosum (strain ATCC 6205 / CBS 148.51 / DSM 1962 / NBRC 6347 / NRRL 1970) (Soil fungus).